We begin with the raw amino-acid sequence, 535 residues long: Thermosome subunit gamma (535 aa).

This sequence belongs to the TCP-1 chaperonin family. Forms a heterooligomeric complex of two stacked nine-membered rings; one of alpha and the other of beta subunits.

It is found in the cytoplasm. It carries out the reaction ATP + H2O = ADP + phosphate + H(+). In terms of biological role, molecular chaperone; binds unfolded polypeptides in vitro, and has a weak ATPase activity. The chain is Thermosome subunit gamma (thsC) from Saccharolobus shibatae (strain ATCC 51178 / DSM 5389 / JCM 8931 / NBRC 15437 / B12) (Sulfolobus shibatae).